The sequence spans 316 residues: uncharacterized protein (316 aa).

The S4 RNA-binding domain maps to 16–89 (ERLDKFLARA…IPINIIYEDE (74 aa)). The active site involves Asp-140.

The protein belongs to the pseudouridine synthase RluA family.

The enzyme catalyses a uridine in RNA = a pseudouridine in RNA. This is an uncharacterized protein from Aquifex aeolicus (strain VF5).